The primary structure comprises 462 residues: MTVTRFAPSPTGYLHIGGLRTALFSWLTARHNNGKFLLRIEDTDMARNSEEAKDAILKAFEWVGMSHDGEVVYQSKRFDLYKKYIDQLLEEGKAYKCYMTKEELNALREEQMAKKERTRYDGRYRDFTGTPPEGVKPVIRIKAPQEGTISFVDGVKGAMNIAANEVDDFIIARSDGTPTYNFVVAIDDALMGLTDVIRGDDHLYNTPKQIVVYNALGFSIPNFYHVAMINNEQGKKLSKRDGATDVMEYKALGFLPEALLNFLVRLGWSHGDQEIFSVEEMIEQFDPKDINKSASNYNLDKLLWLNAHYIKNKSNSELAELLKEFGVDISEHDKLEMLLDATKERGKTLVELAEQIKLILTAPTDYDEKAVKKAFKGEAKEILTDFIAMLQTWEKPLHLPVDYHEVMEKIVAEKEIGFGKIGMPLRVSLLGSMTGAGMDEVMAIIGVDETIERIERAVSTIA.

The 'HIGH' region signature appears at 8 to 18; the sequence is PSPTGYLHIGG. A 'KMSKS' region motif is present at residues 236 to 240; that stretch reads KLSKR. Residue lysine 239 coordinates ATP.

Belongs to the class-I aminoacyl-tRNA synthetase family. Glutamate--tRNA ligase type 1 subfamily. In terms of assembly, monomer.

Its subcellular location is the cytoplasm. It carries out the reaction tRNA(Glu) + L-glutamate + ATP = L-glutamyl-tRNA(Glu) + AMP + diphosphate. In terms of biological role, catalyzes the attachment of glutamate to tRNA(Glu) in a two-step reaction: glutamate is first activated by ATP to form Glu-AMP and then transferred to the acceptor end of tRNA(Glu). In Sulfurovum sp. (strain NBC37-1), this protein is Glutamate--tRNA ligase 1.